Here is a 396-residue protein sequence, read N- to C-terminus: S-arrestin (396 aa).

Positions 375 to 386 (ARDPLKGELQAE) are enriched in basic and acidic residues. Residues 375–396 (ARDPLKGELQAEEKEEEEDDEK) form a disordered region. The span at 387-396 (EKEEEEDDEK) shows a compositional bias: acidic residues.

The protein belongs to the arrestin family. As to quaternary structure, interacts with RHO (via the phosphorylated C-terminus).

Its subcellular location is the cell projection. The protein resides in the cilium. It localises to the photoreceptor outer segment. The protein localises to the membrane. Functionally, binds to photoactivated, phosphorylated RHO and terminates RHO signaling via G-proteins by competing with G-proteins for the same binding site on RHO. May play a role in preventing light-dependent degeneration of retinal photoreceptor cells. This Xenopus laevis (African clawed frog) protein is S-arrestin (sag).